A 388-amino-acid polypeptide reads, in one-letter code: Chorismate synthase (388 aa).

NADP(+) contacts are provided by Arg39 and Arg45. FMN contacts are provided by residues 130–132 (RSS), 251–252 (NA), Gly296, 311–315 (KPIPT), and Arg337.

This sequence belongs to the chorismate synthase family. Homotetramer. It depends on FMNH2 as a cofactor.

The enzyme catalyses 5-O-(1-carboxyvinyl)-3-phosphoshikimate = chorismate + phosphate. It participates in metabolic intermediate biosynthesis; chorismate biosynthesis; chorismate from D-erythrose 4-phosphate and phosphoenolpyruvate: step 7/7. Functionally, catalyzes the anti-1,4-elimination of the C-3 phosphate and the C-6 proR hydrogen from 5-enolpyruvylshikimate-3-phosphate (EPSP) to yield chorismate, which is the branch point compound that serves as the starting substrate for the three terminal pathways of aromatic amino acid biosynthesis. This reaction introduces a second double bond into the aromatic ring system. In Streptococcus pneumoniae serotype 2 (strain D39 / NCTC 7466), this protein is Chorismate synthase.